A 416-amino-acid polypeptide reads, in one-letter code: Queuine tRNA-ribosyltransferase accessory subunit 2 (416 aa).

Zn(2+)-binding residues include Cys-350, Cys-352, Cys-355, and His-381.

It belongs to the queuine tRNA-ribosyltransferase family. QTRT2 subfamily. Heterodimer of a catalytic subunit qtrt1 and an accessory subunit qtrt2. The cofactor is Zn(2+).

It localises to the cytoplasm. The protein localises to the mitochondrion outer membrane. Non-catalytic subunit of the queuine tRNA-ribosyltransferase (TGT) that catalyzes the base-exchange of a guanine (G) residue with queuine (Q) at position 34 (anticodon wobble position) in tRNAs with GU(N) anticodons (tRNA-Asp, -Asn, -His and -Tyr), resulting in the hypermodified nucleoside queuosine (7-(((4,5-cis-dihydroxy-2-cyclopenten-1-yl)amino)methyl)-7-deazaguanosine). This is Queuine tRNA-ribosyltransferase accessory subunit 2 from Danio rerio (Zebrafish).